The following is a 957-amino-acid chain: Valine--tRNA ligase (957 aa).

The 'HIGH' region motif lies at 47–57; it reads PNITGQLHLGH. Residues 558–562 carry the 'KMSKS' region motif; it reads KMSKS. An ATP-binding site is contributed by Lys561. Residues 889–918 adopt a coiled-coil conformation; sequence FNKENEINRLKKESELINRKIETIQKLLDD.

Belongs to the class-I aminoacyl-tRNA synthetase family. ValS type 1 subfamily. As to quaternary structure, monomer.

Its subcellular location is the cytoplasm. It carries out the reaction tRNA(Val) + L-valine + ATP = L-valyl-tRNA(Val) + AMP + diphosphate. Functionally, catalyzes the attachment of valine to tRNA(Val). As ValRS can inadvertently accommodate and process structurally similar amino acids such as threonine, to avoid such errors, it has a 'posttransfer' editing activity that hydrolyzes mischarged Thr-tRNA(Val) in a tRNA-dependent manner. The sequence is that of Valine--tRNA ligase from Blochmanniella pennsylvanica (strain BPEN).